The chain runs to 515 residues: Fatty acyl-CoA reductase 2 (515 aa).

The Cytoplasmic segment spans residues 1–464 (MSTIAAFYGG…KAKQRLKRLR (464 aa)). Residues 465–484 (NIHYLFNTALFLIAWRLLIA) form a helical membrane-spanning segment. Residues 485 to 515 (RSQMARNVWFFIVSFCYKFLSYFRASSTLKV) are Peroxisomal-facing.

The protein belongs to the fatty acyl-CoA reductase family.

The protein resides in the peroxisome membrane. It carries out the reaction a long-chain fatty acyl-CoA + 2 NADPH + 2 H(+) = a long-chain primary fatty alcohol + 2 NADP(+) + CoA. It catalyses the reaction a very long-chain fatty acyl-CoA + 2 NADPH + 2 H(+) = a very long-chain primary fatty alcohol + 2 NADP(+) + CoA. The enzyme catalyses an ultra-long-chain fatty acyl-CoA + 2 NADPH + 2 H(+) = an ultra long-chain primary fatty alcohol + 2 NADP(+) + CoA. The catalysed reaction is hexadecanoyl-CoA + 2 NADPH + 2 H(+) = hexadecan-1-ol + 2 NADP(+) + CoA. It carries out the reaction octadecanoyl-CoA + 2 NADPH + 2 H(+) = octadecan-1-ol + 2 NADP(+) + CoA. It catalyses the reaction eicosanoyl-CoA + 2 NADPH + 2 H(+) = eicosan-1-ol + 2 NADP(+) + CoA. The enzyme catalyses docosanoyl-CoA + 2 NADPH + 2 H(+) = docosan-1-ol + 2 NADP(+) + CoA. The catalysed reaction is tetracosanoyl-CoA + 2 NADPH + 2 H(+) = tetracosan-1-ol + 2 NADP(+) + CoA. It carries out the reaction hexacosanoyl-CoA + 2 NADPH + 2 H(+) = hexacosan-1-ol + 2 NADP(+) + CoA. It catalyses the reaction octacosanoyl-CoA + 2 NADPH + 2 H(+) = octacosan-1-ol + 2 NADP(+) + CoA. The enzyme catalyses triacontanoyl-CoA + 2 NADPH + 2 H(+) = triacontan-1-ol + 2 NADP(+) + CoA. The catalysed reaction is 18-methylnonadecanoyl-CoA + 2 NADPH + 2 H(+) = 18-methylnonadecan-1-ol + 2 NADP(+) + CoA. It carries out the reaction 20-methylheneicosanoyl-CoA + 2 NADPH + 2 H(+) = 20-methylheneicosan-1-ol + 2 NADP(+) + CoA. It catalyses the reaction 22-methyltricosanoyl-CoA + 2 NADPH + 2 H(+) = 22-methyltricosan-1-ol + 2 NADP(+) + CoA. The enzyme catalyses 24-methylpentacosanoyl-CoA + 2 NADPH + 2 H(+) = 24-methylpentacosan-1-ol + 2 NADP(+) + CoA. Catalyzes the reduction of saturated but not unsaturated C16 or C18 fatty acyl-CoA to fatty alcohols (FAls). A lower activity can be observed with shorter fatty acyl-CoA substrates. Can produce very long-chain and ultra long-chain FAls, regardless of whether they have a straight or branched chain. Involved in the production of ether lipids/plasmalogens and wax monoesters whose synthesis requires FAls as substrates. This Homo sapiens (Human) protein is Fatty acyl-CoA reductase 2.